Here is a 152-residue protein sequence, read N- to C-terminus: uncharacterized protein (152 aa).

The HTH marR-type domain maps to 3–143; that stretch reads EQKLCQAINL…IIEIFTILKS (141 aa). Positions 55–78 form a DNA-binding region, H-T-H motif; the sequence is PGSLAMYQNVHKSAISNRLKKLLE.

This is an uncharacterized protein from Bacillus subtilis (strain 168).